The chain runs to 626 residues: Two-component response regulator ORR24 (626 aa).

The disordered stretch occupies residues 1-22; it reads MTVEERQGRVGGHGVSGGGGGR. The span at 9–22 shows a compositional bias: gly residues; it reads RVGGHGVSGGGGGR. Residues 30-145 form the Response regulatory domain; it reads RVLAVDDDPT…QLRTIWQHVI (116 aa). The residue at position 81 (Asp-81) is a 4-aspartylphosphate. Residues 151–162 show a composition bias toward basic and acidic residues; that stretch reads DAKNRGNDDDAG. Disordered stretches follow at residues 151–215 and 402–440; these read DAKN…KKPR and PLES…RTTN. Acidic residues predominate over residues 191–202; sequence NGDDGDDSDENS. The myb-like GARP DNA-binding region spans 210–269; sequence TQKKPRVVWSVELHRKFVAAVNQLGIEKAVPKKILDLMNVENITRENVASHLQKYRLYLK. Positions 402-421 are enriched in polar residues; it reads PLESSNQQHLSRVHSSSADP.

It belongs to the ARR family. Type-B subfamily. In terms of processing, two-component system major event consists of a His-to-Asp phosphorelay between a sensor histidine kinase (HK) and a response regulator (RR). In plants, the His-to-Asp phosphorelay involves an additional intermediate named Histidine-containing phosphotransfer protein (HPt). This multistep phosphorelay consists of a His-Asp-His-Asp sequential transfer of a phosphate group between first a His and an Asp of the HK protein, followed by the transfer to a conserved His of the HPt protein and finally the transfer to an Asp in the receiver domain of the RR protein.

The protein resides in the nucleus. In terms of biological role, transcriptional activator that binds specific DNA sequence. Functions as a response regulator involved in His-to-Asp phosphorelay signal transduction system. Phosphorylation of the Asp residue in the receiver domain activates the ability of the protein to promote the transcription of target genes. May directly activate some type-A response regulators in response to cytokinins. The chain is Two-component response regulator ORR24 from Oryza sativa subsp. japonica (Rice).